The chain runs to 192 residues: Thymidylate kinase (192 aa).

Glycine 7–serine 14 provides a ligand contact to ATP.

This sequence belongs to the thymidylate kinase family.

It carries out the reaction dTMP + ATP = dTDP + ADP. Phosphorylation of dTMP to form dTDP in both de novo and salvage pathways of dTTP synthesis. The chain is Thymidylate kinase from Campylobacter jejuni subsp. doylei (strain ATCC BAA-1458 / RM4099 / 269.97).